We begin with the raw amino-acid sequence, 239 residues long: tRNA (guanine-N(7)-)-methyltransferase (239 aa).

S-adenosyl-L-methionine-binding positions include G64, 87–88, 120–121, and L140; these read EI and NA. D143 is a catalytic residue. 218–220 contributes to the S-adenosyl-L-methionine binding site; that stretch reads SEE.

It belongs to the class I-like SAM-binding methyltransferase superfamily. TrmB family.

It localises to the nucleus. The enzyme catalyses guanosine(46) in tRNA + S-adenosyl-L-methionine = N(7)-methylguanosine(46) in tRNA + S-adenosyl-L-homocysteine. Its pathway is tRNA modification; N(7)-methylguanine-tRNA biosynthesis. Functionally, catalyzes the formation of N(7)-methylguanine at position 46 (m7G46) in tRNA. This is tRNA (guanine-N(7)-)-methyltransferase from Culex quinquefasciatus (Southern house mosquito).